The primary structure comprises 312 residues: Gamma-soluble NSF attachment protein (312 aa).

The tract at residues 281-312 is disordered; the sequence is KKKAAAPPQAKPEGTAAPAAEEEEDEYAGGLC. Residues 285 to 299 are compositionally biased toward low complexity; the sequence is AAPPQAKPEGTAAPA. Acidic residues predominate over residues 300-312; that stretch reads AEEEEDEYAGGLC.

This sequence belongs to the SNAP family. As to quaternary structure, interacts with RAB11FIP5. Interacts with VTI1A.

It localises to the membrane. The protein localises to the golgi apparatus. Functionally, required for vesicular transport between the endoplasmic reticulum and the Golgi apparatus. The chain is Gamma-soluble NSF attachment protein from Bos taurus (Bovine).